The following is a 556-amino-acid chain: Solute carrier family 22 member 20 (556 aa).

Over 1–15 (MAFTDLLDALGGVGR) the chain is Cytoplasmic. A helical membrane pass occupies residues 16-36 (FQLVYTALLLLPCGLLACHTF). At 37-137 (LQNFTAAAPP…LVCEARTLRD (101 aa)) the chain is on the extracellular side. N-linked (GlcNAc...) asparagine glycosylation is found at Asn-39, Asn-54, Asn-61, and Asn-96. The helical transmembrane segment at 138–158 (LAQSIYMSGVLVGAALFGGLA) threads the bilayer. At 159–166 (DRLGRKAP) the chain is on the cytoplasmic side. The chain crosses the membrane as a helical span at residues 167-187 (LVWSYLQLAVSGAATAYVGSF). Topologically, residues 188–194 (SAYCVFR) are extracellular. A helical membrane pass occupies residues 195–215 (FLMGMTFSGIILNSLSLVVEW). The Cytoplasmic portion of the chain corresponds to 216–225 (MPTRGRTVAG). Residues 226–246 (ILLGFSFTLGQLILAGVAYLI) traverse the membrane as a helical segment. Topologically, residues 247-250 (RPWR) are extracellular. A helical membrane pass occupies residues 251 to 271 (WLQFAVSAPFLVFFLYSWWLP). The Cytoplasmic portion of the chain corresponds to 272 to 339 (ESSRWLLLHG…DLFRTPAIRR (68 aa)). Residues 340–360 (VTCCLMGVWFSNSVAYYGLAM) traverse the membrane as a helical segment. Over 361–366 (DLQKFG) the chain is Extracellular. Residues 367 to 387 (LSIYLVQALFGIIDIPAMLVA) traverse the membrane as a helical segment. Residues 388 to 397 (TTTMIYVGRR) lie on the Cytoplasmic side of the membrane. A helical membrane pass occupies residues 398-418 (ATVSSFLILAGLMVIANMFMP). The Extracellular portion of the chain corresponds to 419 to 425 (EDLQTLR). Residues 426–446 (TVQAALGKGCLASSFICVYLF) form a helical membrane-spanning segment. Topologically, residues 447–457 (TGELYPTEIRQ) are cytoplasmic. A helical transmembrane segment spans residues 458–478 (MGMGFASVNARLGGLVAPLIT). Residues 479-485 (TLGEISP) are Extracellular-facing. A helical transmembrane segment spans residues 486–506 (VLPPVSFGATSVLAGMAVACF). The Cytoplasmic portion of the chain corresponds to 507–556 (LTETRNVPLVETIAAMERRVKQGRSKRDTEQKSEEISLQQLGASPLKETI). Residues 526 to 541 (VKQGRSKRDTEQKSEE) show a composition bias toward basic and acidic residues. Residues 526–556 (VKQGRSKRDTEQKSEEISLQQLGASPLKETI) form a disordered region.

It belongs to the major facilitator (TC 2.A.1) superfamily. Organic cation transporter (TC 2.A.1.19) family. Highly expressed in olfactory mucosa. Weakly expressed in testis. Not detected in heart, spleen, lung, kidney or brain.

It is found in the membrane. Organic anion transporter that mediates the uptake of estrone sulfate. Inhibited by probenecid, propionate, 2-methylbutyrate, 3-methylbutyrate, benzoate, heptanoate and 2-ethylhaxanoate. May act as an odorant transporter. This Mus musculus (Mouse) protein is Solute carrier family 22 member 20 (Slc22a20).